Reading from the N-terminus, the 301-residue chain is Probable alpha-L-glutamate ligase (301 aa).

Residues L104–E287 form the ATP-grasp domain. ATP-binding positions include K141, E178 to Y179, D187, and R211 to N213. D248, E260, and N262 together coordinate Mg(2+). Positions 248, 260, and 262 each coordinate Mn(2+).

Belongs to the RimK family. It depends on Mg(2+) as a cofactor. Requires Mn(2+) as cofactor.

This is Probable alpha-L-glutamate ligase from Methanococcoides burtonii (strain DSM 6242 / NBRC 107633 / OCM 468 / ACE-M).